Here is a 368-residue protein sequence, read N- to C-terminus: V-type proton ATPase subunit C (368 aa).

It belongs to the V-ATPase C subunit family. V-ATPase is a heteromultimeric enzyme composed of a peripheral catalytic V1 complex (components A to H) attached to an integral membrane V0 proton pore complex (components: a, c, c', c'' and d).

Functionally, subunit of the peripheral V1 complex of vacuolar ATPase. Subunit C is necessary for the assembly of the catalytic sector of the enzyme and is likely to have a specific function in its catalytic activity. V-ATPase is responsible for acidifying a variety of intracellular compartments in eukaryotic cells. In Dictyostelium discoideum (Social amoeba), this protein is V-type proton ATPase subunit C (vatC).